A 154-amino-acid polypeptide reads, in one-letter code: Myoglobin (154 aa).

The Globin domain maps to 2–148; the sequence is GLSDGEWQLV…FRNDMAAKYK (147 aa). S4 is subject to Phosphoserine. H65 contributes to the nitrite binding site. H65 contributes to the O2 binding site. At T68 the chain carries Phosphothreonine. H94 lines the heme b pocket.

This sequence belongs to the globin family. In terms of assembly, monomeric.

The protein localises to the cytoplasm. Its subcellular location is the sarcoplasm. It catalyses the reaction Fe(III)-heme b-[protein] + nitric oxide + H2O = Fe(II)-heme b-[protein] + nitrite + 2 H(+). The enzyme catalyses H2O2 + AH2 = A + 2 H2O. In terms of biological role, monomeric heme protein which primary function is to store oxygen and facilitate its diffusion within muscle tissues. Reversibly binds oxygen through a pentacoordinated heme iron and enables its timely and efficient release as needed during periods of heightened demand. Depending on the oxidative conditions of tissues and cells, and in addition to its ability to bind oxygen, it also has a nitrite reductase activity whereby it regulates the production of bioactive nitric oxide. Under stress conditions, like hypoxia and anoxia, it also protects cells against reactive oxygen species thanks to its pseudoperoxidase activity. This is Myoglobin (MB) from Callithrix jacchus (White-tufted-ear marmoset).